The following is a 2283-amino-acid chain: DNA polymerase epsilon catalytic subunit A (2283 aa).

The interval 1 to 32 (MVLRNSGRRHPEPGADGEGSRDDGPSSSVSAL) is disordered. Positions 9–24 (RHPEPGADGEGSRDDG) are enriched in basic and acidic residues. Residues S1184, S1296, and S1316 each carry the phosphoserine modification. 2 disordered regions span residues 1935–1968 (GQVK…GESE) and 2014–2041 (HSAP…TGSL). Residues 1936 to 1946 (QVKEQDSQARE) show a composition bias toward basic and acidic residues. Residues 1947–1968 (ETDEEEEDKEKDEEEEGMGESE) are compositionally biased toward acidic residues. Polar residues predominate over residues 2028 to 2037 (SQFSQESEGA). Residues C2155, C2158, C2184, and C2187 each coordinate Zn(2+). A CysA-type zinc finger spans residues 2155-2187 (CHSCNFCRDLDLCKDSSFSQDGAILPQWLCSNC). 4 residues coordinate [4Fe-4S] cluster: C2218, C2221, C2233, and C2235. The CysB motif motif lies at 2218–2235 (CLKCRGMKETHMPVYCSC).

It belongs to the DNA polymerase type-B family. In terms of assembly, component of the DNA polymerase epsilon complex consisting of four subunits: the catalytic subunit POLE and the accessory subunits POLE2, POLE3 and POLE4. Interacts with RAD17 and TOPBP1. Requires [4Fe-4S] cluster as cofactor.

It localises to the nucleus. The enzyme catalyses DNA(n) + a 2'-deoxyribonucleoside 5'-triphosphate = DNA(n+1) + diphosphate. Functionally, catalytic component of the DNA polymerase epsilon complex. Participates in chromosomal DNA replication. Required during synthesis of the leading DNA strands at the replication fork and binds at/or near replication origins and moves along DNA with the replication fork. Has 3'-5' proofreading exonuclease activity that corrects errors arising during DNA replication. It is also involved in DNA synthesis during DNA repair. This is DNA polymerase epsilon catalytic subunit A (Pole) from Mus musculus (Mouse).